The sequence spans 598 residues: Elongation factor 4 (598 aa).

Residues 4 to 181 (SKIRNFSIIA…AVIEKIPAPK (178 aa)) enclose the tr-type G domain. GTP-binding positions include 16–21 (DHGKST) and 128–131 (NKID).

This sequence belongs to the TRAFAC class translation factor GTPase superfamily. Classic translation factor GTPase family. LepA subfamily.

The protein resides in the cell membrane. It carries out the reaction GTP + H2O = GDP + phosphate + H(+). Required for accurate and efficient protein synthesis under certain stress conditions. May act as a fidelity factor of the translation reaction, by catalyzing a one-codon backward translocation of tRNAs on improperly translocated ribosomes. Back-translocation proceeds from a post-translocation (POST) complex to a pre-translocation (PRE) complex, thus giving elongation factor G a second chance to translocate the tRNAs correctly. Binds to ribosomes in a GTP-dependent manner. The sequence is that of Elongation factor 4 from Mycoplasma mobile (strain ATCC 43663 / 163K / NCTC 11711) (Mesomycoplasma mobile).